The sequence spans 162 residues: Shikimate kinase (162 aa).

11 to 16 (GSGKSS) contacts ATP. A Mg(2+)-binding site is contributed by Ser15. 3 residues coordinate substrate: Asp33, Arg57, and Gly80. Arg116 contacts ATP. Position 132 (Arg132) interacts with substrate.

It belongs to the shikimate kinase family. As to quaternary structure, monomer. Requires Mg(2+) as cofactor.

It is found in the cytoplasm. It catalyses the reaction shikimate + ATP = 3-phosphoshikimate + ADP + H(+). It participates in metabolic intermediate biosynthesis; chorismate biosynthesis; chorismate from D-erythrose 4-phosphate and phosphoenolpyruvate: step 5/7. Catalyzes the specific phosphorylation of the 3-hydroxyl group of shikimic acid using ATP as a cosubstrate. The chain is Shikimate kinase from Helicobacter pylori (strain Shi470).